A 116-amino-acid polypeptide reads, in one-letter code: Large ribosomal subunit protein bL17 (116 aa).

The protein belongs to the bacterial ribosomal protein bL17 family. In terms of assembly, part of the 50S ribosomal subunit. Contacts protein L32.

The sequence is that of Large ribosomal subunit protein bL17 from Dictyoglomus turgidum (strain DSM 6724 / Z-1310).